A 156-amino-acid chain; its full sequence is B3 domain-containing protein At5g26805 (156 aa).

Residues 57–155 constitute a DNA-binding region (TF-B3); sequence KFQLPMEKIR…MFCFSVLDGR (99 aa).

Its subcellular location is the nucleus. This chain is B3 domain-containing protein At5g26805, found in Arabidopsis thaliana (Mouse-ear cress).